Reading from the N-terminus, the 466-residue chain is MAQTLYDKLWQSHVVDTGDDGTTVLYIDRHLLHEVTSPQAFEGLKLAGRRPWRVSANLMVADHNVPTTDRSEGIADPTSRLQVETLDHNAHEYGLTYFSMRDKRQGIVHVIGPEQGATLPGMTVVCGDSHTSTHGAFGALAHGIGTSEVEHVLATQTLLAQKSKAMLVQVDGALPVGVTAKDIVLAIIGKIGTAGGTGYAIEFAGSTIRSLSMEGRMTICNMAIEAGARAGMVAVDETTINYVKGRPLSPVGPHWDRAVEYWRTLHSDVGAKFDLVVTLNAAEVKPQVSWGTSPEMVVSVDGRVPDPDKEKDATKRDGMEKALVYMGLKPNTPITDIRIDKVFIGSCTNSRIQDLRAAAAVVRGKHRASNVKLAMVVPGSGLVKEQAEREGLDKIFKDAGFEWREPGCSMCLAMNADRLEPGERCASTSNRNFEGRQGAGGRTHLVSPAMAAAAGIEGHFVDVRAL.

3 residues coordinate [4Fe-4S] cluster: Cys-347, Cys-408, and Cys-411.

Belongs to the aconitase/IPM isomerase family. LeuC type 1 subfamily. In terms of assembly, heterodimer of LeuC and LeuD. Requires [4Fe-4S] cluster as cofactor.

The enzyme catalyses (2R,3S)-3-isopropylmalate = (2S)-2-isopropylmalate. It participates in amino-acid biosynthesis; L-leucine biosynthesis; L-leucine from 3-methyl-2-oxobutanoate: step 2/4. Catalyzes the isomerization between 2-isopropylmalate and 3-isopropylmalate, via the formation of 2-isopropylmaleate. This is 3-isopropylmalate dehydratase large subunit from Herminiimonas arsenicoxydans.